A 1031-amino-acid chain; its full sequence is Formin-binding protein 4 (1031 aa).

Disordered regions lie at residues 1 to 102 (MMGK…TTRP), 116 to 143 (AYADSDDDESDVSEKTAQSKEANGNQAT), and 166 to 205 (APVVASAPPPTPPRPEPKEAATPALSPTASNGSDTAQTPG). Ser19 bears the Phosphoserine mark. 2 stretches are compositionally biased toward low complexity: residues 41–73 (DSTAAATSQSAPAAATAAAATSPAVPASAAPED) and 83–92 (VVEVPNVVQN). Residues Ser120, Ser125, and Ser128 each carry the phosphoserine modification. The span at 134-143 (SKEANGNQAT) shows a compositional bias: polar residues. At Thr176 the chain carries Phosphothreonine. A compositionally biased stretch (polar residues) spans 190 to 203 (LSPTASNGSDTAQT). Positions 218–252 (EIEMGDWQEVWDENTGCYYYWNTQTNEVTWELPQY) constitute a WW 1 domain. An N6-acetyllysine modification is found at Lys294. Lys305 participates in a covalent cross-link: Glycyl lysine isopeptide (Lys-Gly) (interchain with G-Cter in SUMO1). Lys339 participates in a covalent cross-link: Glycyl lysine isopeptide (Lys-Gly) (interchain with G-Cter in SUMO2). A Glycyl lysine isopeptide (Lys-Gly) (interchain with G-Cter in SUMO1); alternate cross-link involves residue Lys352. Residue Lys352 forms a Glycyl lysine isopeptide (Lys-Gly) (interchain with G-Cter in SUMO2); alternate linkage. A disordered region spans residues 355–518 (DPVSETKETS…KETEVEESSE (164 aa)). Residues 400–414 (ESEEEEEEEEQDTLE) are compositionally biased toward acidic residues. Residues 418-430 (ALERKKAELRALE) show a composition bias toward basic and acidic residues. A phosphoserine mark is found at Ser435, Ser440, Ser443, Ser446, and Ser450. The span at 436-450 (VSGSSPRSDISQPAS) shows a compositional bias: polar residues. Positions 457–466 (IMSKRGKWKM) are enriched in basic residues. Positions 469–482 (RATSPESTSRSSSK) are enriched in low complexity. Phosphoserine occurs at positions 472, 507, and 516. Over residues 499–518 (DSEKIDEISDKETEVEESSE) the composition is skewed to basic and acidic residues. A Glycyl lysine isopeptide (Lys-Gly) (interchain with G-Cter in SUMO1); alternate cross-link involves residue Lys527. Lys527 participates in a covalent cross-link: Glycyl lysine isopeptide (Lys-Gly) (interchain with G-Cter in SUMO2); alternate. Positions 603 to 637 (NATPKGWSCHWDRDHRRYFYVNEQSGESQWEFPDG) constitute a WW 2 domain. 3 disordered regions span residues 629–681 (ESQW…SLCK), 712–813 (PLPL…VQRS), and 900–994 (PAQA…RIEE). Residues 643 to 663 (SQTKEVRDESLPKLTVKDKTC) show a composition bias toward basic and acidic residues. Residues 664-677 (TDPNSTESSENPTG) are compositionally biased toward polar residues. The span at 712–741 (PLPLEMPPPPPPPPESPPPPPPPPPPPPPL) shows a compositional bias: pro residues. Positions 742–757 (EDGEIQEVEMEDEGSE) are enriched in acidic residues. Over residues 771–794 (KPSTQTTAVTSQSLVDSTASSPPS) the composition is skewed to polar residues. Residues 913-939 (VEPPPPPPPPPTPTPPPPPPAPKVPPP) are compositionally biased toward pro residues. A compositionally biased stretch (basic residues) spans 943 to 955 (RKGKKDKAKKSKT). The segment covering 971-984 (LDEEDNSSSSEEDR) has biased composition (acidic residues). A phosphoserine mark is found at Ser977, Ser978, and Ser979. Positions 985-994 (ESTAQKRIEE) are enriched in basic and acidic residues.

Binds FMN1. Interacts with the Arg/Gly-rich-flanked Pro-rich regions of KHDRBS1/SAM68. Arginine methylation in these regions has no effect on this binding. As to expression, ubiquitous. Highest levels in spleen and thymus.

The protein is Formin-binding protein 4 (Fnbp4) of Mus musculus (Mouse).